The sequence spans 599 residues: Cytadherence high molecular weight protein 3 (599 aa).

Over residues 220–236 (VQVDSGSQNHSFNNSPS) the composition is skewed to polar residues. The interval 220 to 241 (VQVDSGSQNHSFNNSPSLKPPL) is disordered.

It localises to the cell projection. Its subcellular location is the attachment organelle membrane. Component of the cytoskeleton-like structure which stabilizes the shape of the wall-less mycoplasma. This cytoskeleton-like network of accessory proteins containing HMW proteins 1 to 5 allows the proper anchoring of cytadhesin proteins in the mycoplasmal membrane at the attachment organelle. Essential for successful surface parasitism. This chain is Cytadherence high molecular weight protein 3 (hmw3), found in Mycoplasma genitalium (strain ATCC 33530 / DSM 19775 / NCTC 10195 / G37) (Mycoplasmoides genitalium).